The chain runs to 727 residues: Cadmium-transporting ATPase (727 aa).

The 64-residue stretch at 12–75 folds into the HMA domain; sequence EMNVYRVQGF…AGAFENLKVS (64 aa). Positions 23 and 26 each coordinate Cd(2+). A run of 5 helical transmembrane segments spans residues 106-126, 130-150, 171-191, 336-356, and 364-384; these read STLLFATLLIAFGYLSHFVNG, LVTSMLFVGSIVIGGYSLFKV, IGATIIGKWAEASIVVILFAI, IIMVIAALVAVVPPLFFGGSW, and LAVLVVGCPCALVISTPISIV. D415 serves as the catalytic 4-aspartylphosphate intermediate. The next 2 helical transmembrane spans lie at 672-694 and 699-721; these read LNIIKANITFAIGIKIIALLLVI and TLWIAILSDMGATILVALNSLRL.

The protein belongs to the cation transport ATPase (P-type) (TC 3.A.3) family. Type IB subfamily.

Its subcellular location is the cell membrane. It carries out the reaction Cd(2+)(in) + ATP + H2O = Cd(2+)(out) + ADP + phosphate + H(+). Inhibited by the antibiotic bafilomycin A1. Partially inhibited by DCCD, nigericin and FCCP. Functionally, couples the hydrolysis of ATP with the export of cadmium. Involved in cadmium resistance. The chain is Cadmium-transporting ATPase from Staphylococcus aureus.